A 334-amino-acid chain; its full sequence is Malate dehydrogenase, cytoplasmic (334 aa).

The residue at position 2 (S2) is an N-acetylserine. NAD(+) contacts are provided by residues 11–17 (GAAGQIA) and D42. 2 residues coordinate substrate: R92 and R98. An NAD(+)-binding site is contributed by N105. K110 is subject to N6-succinyllysine. Q112 is a binding site for NAD(+). N6-acetyllysine is present on residues K118 and K121. 129–131 (VGN) contacts NAD(+). The substrate site is built by N131 and R162. H187 (proton acceptor) is an active-site residue. K214 is subject to N6-succinyllysine. Phosphoserine is present on S217. R230 bears the Omega-N-methylarginine mark. At S241 the chain carries Phosphoserine. K298 is subject to N6-acetyllysine; alternate. K298 is subject to N6-succinyllysine; alternate. S309 carries the post-translational modification Phosphoserine. K318 bears the N6-succinyllysine mark. Phosphoserine is present on residues S332 and S333.

It belongs to the LDH/MDH superfamily. MDH type 2 family. As to quaternary structure, homodimer. In terms of processing, ISGylated. Acetylation at Lys-118 dramatically enhances enzymatic activity and promotes adipogenic differentiation.

It localises to the cytoplasm. Its subcellular location is the cytosol. It catalyses the reaction (S)-malate + NAD(+) = oxaloacetate + NADH + H(+). The enzyme catalyses (2R)-2-hydroxy-3-(4-hydroxyphenyl)propanoate + NAD(+) = 3-(4-hydroxyphenyl)pyruvate + NADH + H(+). It carries out the reaction (S)-2-hydroxyglutarate + NAD(+) = 2-oxoglutarate + NADH + H(+). Functionally, catalyzes the reduction of aromatic alpha-keto acids in the presence of NADH. Plays essential roles in the malate-aspartate shuttle and the tricarboxylic acid cycle, important in mitochondrial NADH supply for oxidative phosphorylation. Catalyzes the reduction of 2-oxoglutarate to 2-hydroxyglutarate, leading to elevated reactive oxygen species (ROS). The sequence is that of Malate dehydrogenase, cytoplasmic (MDH1) from Felis catus (Cat).